We begin with the raw amino-acid sequence, 184 residues long: dCTP deaminase (184 aa).

107–112 lines the dCTP pocket; that stretch reads KSTYAR. Residue Glu-133 is the Proton donor/acceptor of the active site. 3 residues coordinate dCTP: Gln-152, Tyr-166, and Gln-176.

Belongs to the dCTP deaminase family. In terms of assembly, homotrimer.

The catalysed reaction is dCTP + H2O + H(+) = dUTP + NH4(+). The protein operates within pyrimidine metabolism; dUMP biosynthesis; dUMP from dCTP (dUTP route): step 1/2. Functionally, catalyzes the deamination of dCTP to dUTP. The sequence is that of dCTP deaminase from Herpetosiphon aurantiacus (strain ATCC 23779 / DSM 785 / 114-95).